The primary structure comprises 283 residues: Putative Ig-like domain-containing protein ORF10 (283 aa).

The first 55 residues, 1-55 (MIDKRNKKAVTHISTCLCHSSIPIYGDSPFLNTHRAAMDPRPLVLLLLLASHIST), serve as a signal peptide directing secretion. N-linked (GlcNAc...) asparagine; by host glycans are attached at residues Asn75, Asn92, Asn121, Asn157, Asn179, Asn198, Asn223, and Asn229. An Ig-like domain is found at 129-227 (QPLGQSIHHA…IDQQTNLTLT (99 aa)).

The polypeptide is Putative Ig-like domain-containing protein ORF10 (Galliformes (FAdV-1)).